Here is an 826-residue protein sequence, read N- to C-terminus: Sister chromatid cohesion protein PDS5 homolog D (826 aa).

5 HEAT repeats span residues 18–54, 55–94, 151–188, 189–226, and 230–267; these read GTNL…LSMQ, SALI…ITAP, DLIL…DETE, QVST…RCAR, and PYII…HSPV. Disordered stretches follow at residues 261 to 551 and 640 to 826; these read PKVH…EVES and KKSK…KRKS. 2 stretches are compositionally biased toward basic and acidic residues: residues 269–286 and 296–309; these read TKEH…KENL and RHET…EKVR. The Nuclear localization signal 1 motif lies at 281–288; the sequence is SRKENLSK. Positions 311-323 are enriched in polar residues; that stretch reads GNKSSLLKQSLKQ. The short motif at 357–364 is the Nuclear localization signal 2 element; it reads GKRDPLKT. Residues 396 to 408 show a composition bias toward polar residues; sequence SPATSSRSLTGSL. An HEAT 6 repeat occupies 424–461; it reads SLSSPRLKKLASCFRDEEPNQEDDRKIGNSSKQTRSKN. Residues 437-450 show a composition bias toward basic and acidic residues; sequence FRDEEPNQEDDRKI. Polar residues predominate over residues 451-460; it reads GNSSKQTRSK. The segment covering 644–663 has biased composition (low complexity); sequence NVAVSVEPTSSSGVRSSSRT. Residues 665-701 show a composition bias toward basic and acidic residues; the sequence is MKKDCGKRLNKQVEKTREGKNLRSLKELNAETDRTAE. The segment covering 702-724 has biased composition (acidic residues); the sequence is EQEVSLEAESDDRSEEQEYEDDC. Over residues 725–746 the composition is skewed to basic and acidic residues; sequence SDKKEQSQDKGVEAETKEEEKQ. Acidic residues-rich tracts occupy residues 752–763, 771–800, and 811–826; these read GESEGEDSESEE, DDME…EVDD, and EKEE…KRKS. The stretch at 770–825 forms a coiled coil; it reads TDDMEDDEEEEEEEIDHMEDEAEEEKEEVDDKEASANMSEIEKEEEEEEEDEEKRK.

This sequence belongs to the PDS5 family. Interacts with the cohesin complex.

Its subcellular location is the nucleus. Its function is as follows. Cohesin cofactor dispensable during the meiotic division but playing an important role in DNA repair by homologous recombination (HR) probably by helping SMC5/SMC6 complex. Regulator of sister chromatid cohesion in mitosis which may stabilize cohesin complex association with chromatin. May couple sister chromatid cohesion during mitosis to DNA replication. Cohesion ensures that chromosome partitioning is accurate in both meiotic and mitotic cells and plays an important role in DNA repair. The sequence is that of Sister chromatid cohesion protein PDS5 homolog D from Arabidopsis thaliana (Mouse-ear cress).